The primary structure comprises 129 residues: D-ribose pyranase 2 (129 aa).

His20 acts as the Proton donor in catalysis. Residues Asp28, His96, and 118 to 120 (YAN) each bind substrate.

This sequence belongs to the RbsD / FucU family. RbsD subfamily. As to quaternary structure, homodecamer.

Its subcellular location is the cytoplasm. It catalyses the reaction beta-D-ribopyranose = beta-D-ribofuranose. The protein operates within carbohydrate metabolism; D-ribose degradation; D-ribose 5-phosphate from beta-D-ribopyranose: step 1/2. Functionally, catalyzes the interconversion of beta-pyran and beta-furan forms of D-ribose. The polypeptide is D-ribose pyranase 2 (Streptomyces griseus subsp. griseus (strain JCM 4626 / CBS 651.72 / NBRC 13350 / KCC S-0626 / ISP 5235)).